The primary structure comprises 294 residues: Nucleotide-binding protein CLJ_B3680 (294 aa).

8–15 contacts ATP; that stretch reads GLSGAGKT. Position 59–62 (59–62) interacts with GTP; it reads DIRG.

This sequence belongs to the RapZ-like family.

In terms of biological role, displays ATPase and GTPase activities. The sequence is that of Nucleotide-binding protein CLJ_B3680 from Clostridium botulinum (strain 657 / Type Ba4).